The primary structure comprises 116 residues: Large ribosomal subunit protein bL20 (116 aa).

The protein belongs to the bacterial ribosomal protein bL20 family.

In terms of biological role, binds directly to 23S ribosomal RNA and is necessary for the in vitro assembly process of the 50S ribosomal subunit. It is not involved in the protein synthesizing functions of that subunit. The polypeptide is Large ribosomal subunit protein bL20 (Acaryochloris marina (strain MBIC 11017)).